Consider the following 457-residue polypeptide: Adenylosuccinate synthetase (457 aa).

GTP is bound by residues 45–51 and 73–75; these read GDEGKGK and GHT. Aspartate 46 serves as the catalytic Proton acceptor. Mg(2+) contacts are provided by aspartate 46 and glycine 73. IMP contacts are provided by residues 46-49, 71-74, threonine 163, arginine 177, asparagine 255, threonine 270, and arginine 334; these read DEGK and NAGH. The Proton donor role is filled by histidine 74. Residue 330–336 participates in substrate binding; that stretch reads VTTKRVR. GTP contacts are provided by residues arginine 336, 362 to 364, and 444 to 446; these read KLD and GVG.

This sequence belongs to the adenylosuccinate synthetase family. In terms of assembly, homodimer. It depends on Mg(2+) as a cofactor.

The protein localises to the cytoplasm. It carries out the reaction IMP + L-aspartate + GTP = N(6)-(1,2-dicarboxyethyl)-AMP + GDP + phosphate + 2 H(+). It functions in the pathway purine metabolism; AMP biosynthesis via de novo pathway; AMP from IMP: step 1/2. Its function is as follows. Plays an important role in the de novo pathway and in the salvage pathway of purine nucleotide biosynthesis. Catalyzes the first committed step in the biosynthesis of AMP from IMP. In Aedes aegypti (Yellowfever mosquito), this protein is Adenylosuccinate synthetase.